Here is a 228-residue protein sequence, read N- to C-terminus: 2,3-bisphosphoglycerate-dependent phosphoglycerate mutase (228 aa).

Substrate-binding positions include 8–15 (RHGQSVWN), 21–22 (SG), arginine 58, 111–114 (ERMY), lysine 122, 138–139 (RR), and 182–183 (GN). The active-site Tele-phosphohistidine intermediate is histidine 9. Glutamate 111 serves as the catalytic Proton donor/acceptor.

It belongs to the phosphoglycerate mutase family. BPG-dependent PGAM subfamily.

It carries out the reaction (2R)-2-phosphoglycerate = (2R)-3-phosphoglycerate. Its pathway is carbohydrate degradation; glycolysis; pyruvate from D-glyceraldehyde 3-phosphate: step 3/5. In terms of biological role, catalyzes the interconversion of 2-phosphoglycerate and 3-phosphoglycerate. This chain is 2,3-bisphosphoglycerate-dependent phosphoglycerate mutase, found in Chlamydia pneumoniae (Chlamydophila pneumoniae).